Consider the following 448-residue polypeptide: Fumarate hydratase class II (448 aa).

Residues 83–85 (SGT), 113–116 (HPND), 123–125 (SSN), and Thr171 each bind substrate. His172 functions as the Proton donor/acceptor in the catalytic mechanism. Residue Ser302 is part of the active site. Residues Ser303 and 308–310 (KVN) contribute to the substrate site.

The protein belongs to the class-II fumarase/aspartase family. Fumarase subfamily. In terms of assembly, homotetramer.

The protein localises to the cytoplasm. It carries out the reaction (S)-malate = fumarate + H2O. It functions in the pathway carbohydrate metabolism; tricarboxylic acid cycle; (S)-malate from fumarate: step 1/1. Its function is as follows. Involved in the TCA cycle. Catalyzes the stereospecific interconversion of fumarate to L-malate. In Blochmanniella floridana, this protein is Fumarate hydratase class II.